A 925-amino-acid polypeptide reads, in one-letter code: Colossin-D (925 aa).

The N-terminal stretch at 1–26 is a signal peptide; the sequence is MIKVFKDLKFLILITIILLNLKSINC. 11 N-linked (GlcNAc...) asparagine glycosylation sites follow: Asn-47, Asn-95, Asn-142, Asn-166, Asn-283, Asn-334, Asn-344, Asn-378, Asn-401, Asn-511, and Asn-642.

It belongs to the serine-aspartate repeat-containing protein (SDr) family.

Its subcellular location is the secreted. The protein is Colossin-D (colD) of Dictyostelium discoideum (Social amoeba).